Here is a 419-residue protein sequence, read N- to C-terminus: MMFNNENYKDYDQELWEAIQAEEDRQEHNIELIASENMVSKAVMQAQGSVLTNKYAEGYPSKRYYGGTEYVDIVESLAIERAKKLFGAAYANVQPHSGSQANAAAYMALINAGDTVLGMDLAAGGHLTHGSPVNFSGKTYQFVGYTVDKETEKLDYAAILKQAKAVQPKLIVAGASAYSRQIDFEQFRFIADQVGAYLMVDMAHIAGLVAAGLHQNPVPYAHIVTSTTHKTLRGPRGGLLLTNDEAIARKMNAAIFPGLQGGPLEHVIAAKAVAFKEALDPAFTDYARAVIANTAAMAEVFAKDDRFRLISGGTDNHLFLVDVTKVIENGKLAQALLDEVNITLNKNAIPFETLSPFKTSGIRIGCAAITSRGMGVDESRTIAHLIIKALVNHQQPEILEEVRYEVRRLTDAFPLYKKN.

Residues L121 and 125 to 127 contribute to the (6S)-5,6,7,8-tetrahydrofolate site; that span reads GHL. An N6-(pyridoxal phosphate)lysine modification is found at K230. 355 to 357 lines the (6S)-5,6,7,8-tetrahydrofolate pocket; sequence SPF.

The protein belongs to the SHMT family. Homodimer. The cofactor is pyridoxal 5'-phosphate.

It localises to the cytoplasm. The catalysed reaction is (6R)-5,10-methylene-5,6,7,8-tetrahydrofolate + glycine + H2O = (6S)-5,6,7,8-tetrahydrofolate + L-serine. The protein operates within one-carbon metabolism; tetrahydrofolate interconversion. Its pathway is amino-acid biosynthesis; glycine biosynthesis; glycine from L-serine: step 1/1. In terms of biological role, catalyzes the reversible interconversion of serine and glycine with tetrahydrofolate (THF) serving as the one-carbon carrier. This reaction serves as the major source of one-carbon groups required for the biosynthesis of purines, thymidylate, methionine, and other important biomolecules. Also exhibits THF-independent aldolase activity toward beta-hydroxyamino acids, producing glycine and aldehydes, via a retro-aldol mechanism. This Streptococcus equi subsp. zooepidemicus (strain H70) protein is Serine hydroxymethyltransferase.